The chain runs to 683 residues: Dynein, 78 kDa intermediate chain, flagellar outer arm (683 aa).

A disordered region spans residues 1 to 42; the sequence is MPALSPAKKGTDKGKTGKKTGKQEQNAQDYIPPPPPMPGDEA. WD repeat units follow at residues 358-398, 407-450, 562-602, and 608-647; these read HTES…DEPI, KLND…LIPE, DLND…LLPL, and VKKAKLTKLVFNPKHPIVLVGDDKGCVTSLKLSPNLRITS.

It belongs to the dynein intermediate chain family. As to quaternary structure, consists of at least 3 heavy chains (alpha, beta and gamma), 2 intermediate chains and 8 light chains.

The protein resides in the cytoplasm. The protein localises to the cytoskeleton. It is found in the flagellum axoneme. In terms of biological role, is essential for arm assembly or attachment to the outer doublet microtubule. This chain is Dynein, 78 kDa intermediate chain, flagellar outer arm (ODA9), found in Chlamydomonas reinhardtii (Chlamydomonas smithii).